The following is a 225-amino-acid chain: PKHD-type hydroxylase YbiX (225 aa).

Positions 78–177 (TLSTPLFNRY…RVASFMWIQS (100 aa)) constitute a Fe2OG dioxygenase domain. 3 residues coordinate Fe cation: His96, Asp98, and His158. Arg168 contacts 2-oxoglutarate.

Fe(2+) is required as a cofactor. It depends on L-ascorbate as a cofactor.

This Shigella dysenteriae serotype 1 (strain Sd197) protein is PKHD-type hydroxylase YbiX.